A 468-amino-acid chain; its full sequence is MTDKNTSEQLWTGRFTEATDAFVEQFSASEHFDRRLYRQDIAGSMAHARMLAEVGVLTAEERDRIVDGLTRIREEIEHGQFQWSPKLEDVHMNIEKRLTDLIGEAGKKLHTGRSRNDQVATDIRLWLREAIDGILDELLRLQAGLVELAELEADTIMPGFTHMQVAQPVTFGHHLLAWYEMLVRDQGRLEDCRKRLNQMPLGCAALAGTSFPIDREQTCSELGFDRPTRNSLDSVSDRDFAIEFNAAAALVMTHLSRMAEEVILWASPHFGFIDLPDRFCTGSSIMPQKKNPDVAELVRGKTARVHGNLNALLVLMKGQPLAYNRDNQEDKEPLFDTADTLRDALTAFADMLPAMEVQREACYRAARAGFATATDLADYLVRKGVPFRDAHEIVGRAVRYASDEGRDLSELELDELQQFSGTISEDVFEVLTLEGSVAARNHLGGTAPAQVRARVAEARDRLRLLMGK.

The protein belongs to the lyase 1 family. Argininosuccinate lyase subfamily.

The protein localises to the cytoplasm. It catalyses the reaction 2-(N(omega)-L-arginino)succinate = fumarate + L-arginine. Its pathway is amino-acid biosynthesis; L-arginine biosynthesis; L-arginine from L-ornithine and carbamoyl phosphate: step 3/3. This Alkalilimnicola ehrlichii (strain ATCC BAA-1101 / DSM 17681 / MLHE-1) protein is Argininosuccinate lyase.